Here is a 516-residue protein sequence, read N- to C-terminus: rRNA N(6)-adenosine-methyltransferase ZCCHC4 (516 aa).

Positions 40, 42, 66, 75, 127, 130, 142, and 145 each coordinate Zn(2+). The GRF-type zinc-finger motif lies at 40–84 (CPHELGPTLLFVKVNQGKEETRRFYACSACRDRKDCNFFQWEDEK). S-adenosyl-L-methionine is bound by residues 174 to 177 (QYLF), Arg-204, Asp-227, 245 to 246 (NM), and Asp-278. Residues 339-360 (QVVDYDNHALYKHGKTGRKQSP) form a regulatory loop region. Zn(2+)-binding residues include Cys-383, Cys-386, His-396, Cys-397, Cys-400, Cys-403, His-413, Cys-414, Cys-417, Cys-420, His-427, Cys-428, Cys-431, Cys-434, His-439, and Cys-441. One can recognise a DHHC domain in the interval 398-448 (EHCNSCTSKDGRKWNHCFLCKKCVKPSWIHCSICNHCALPDHSCKGPKDGC). Residues 446-463 (DGCFICGELDHKRSACPN) form a CCHC-type zinc finger. Basic residues predominate over residues 472 to 484 (KAVRKQKQRKSNK). Residues 472-516 (KAVRKQKQRKSNKMKMETTKGQSMNHTSATRKKKRRERTHQYLCS) are disordered. Over residues 490–499 (TKGQSMNHTS) the composition is skewed to polar residues. Positions 500–509 (ATRKKKRRER) are enriched in basic residues.

Belongs to the ZCCHC4 family. In terms of assembly, interacts with components of the ASC-1 complex TRIP4, ASCC1, ASCC2 and ASCC3. Interact with AHCYL1 and AHCYL2. Interact with YTHDC2.

The protein localises to the cytoplasm. Its subcellular location is the nucleus. The protein resides in the nucleolus. The catalysed reaction is adenosine(4220) in 28S rRNA + S-adenosyl-L-methionine = N(6)-methyladenosine(4220) in 28S rRNA + S-adenosyl-L-homocysteine + H(+). In terms of biological role, rRNA N6-methyltransferase that specifically methylates the adenine in position 4220 of 28S rRNA. N6-methylation of adenine(4220) in 28S rRNA is required for translation. This is rRNA N(6)-adenosine-methyltransferase ZCCHC4 from Bos taurus (Bovine).